Reading from the N-terminus, the 234-residue chain is MDTLSKKPEQRPEEITAILSSLDRYNPEKISILQEYATTQCADQHSDIEANLALLKLLQFQQQPNPNKEDIICNILSMALANFLTSDFTTALHVLPSYVLDSPAADTLAESIQKLFHLYTLLDGCRFPEFWAVYERDDAHADITADVADFENLVRISITRAVDISSQAIHKDVFRSWLNLSDNKFADYVKELGWKVEGETVVVPPNKENEAKPATTTESIKIEQISRLLKRTNE.

Residues serine 46–serine 219 enclose the PCI domain.

It belongs to the eIF-3 subunit K family. As to quaternary structure, component of the eukaryotic translation initiation factor 3 (eIF-3) complex.

The protein localises to the cytoplasm. Its function is as follows. Component of the eukaryotic translation initiation factor 3 (eIF-3) complex, which is involved in protein synthesis of a specialized repertoire of mRNAs and, together with other initiation factors, stimulates binding of mRNA and methionyl-tRNAi to the 40S ribosome. The eIF-3 complex specifically targets and initiates translation of a subset of mRNAs involved in cell proliferation. In Yarrowia lipolytica (strain CLIB 122 / E 150) (Yeast), this protein is Eukaryotic translation initiation factor 3 subunit K.